Here is a 624-residue protein sequence, read N- to C-terminus: Altered inheritance of mitochondria protein 9, mitochondrial (624 aa).

The N-terminal 34 residues, 1 to 34, are a transit peptide targeting the mitochondrion; sequence MLSRVARCSRTLNQVTRNGQSGLFSAVLRTSIRQ.

Belongs to the AIM9 family.

The protein resides in the mitochondrion. The polypeptide is Altered inheritance of mitochondria protein 9, mitochondrial (AIM9) (Candida albicans (strain WO-1) (Yeast)).